The sequence spans 160 residues: MHFSLVLLVFAAIVIPICADTSTTKDYDDKKSLQTSNFGTAAVANMLHVLQSSDNSKRLLRMNDKAVISDHEEERSSLVKNKQKKLSYRIKKGWENVKKPFKKSAKIIEKPLKKGSKIIIEPFKKVSKIIKKFAIKGAKIVKKPFKKSARIIKKSFKNLN.

The signal sequence occupies residues 1–19 (MHFSLVLLVFAAIVIPICA). Residues 58–75 (RLLRMNDKAVISDHEEER) carry the RxLR-dEER motif.

Belongs to the RxLR effector family.

It is found in the secreted. The protein resides in the host cell membrane. Its subcellular location is the host nucleus. Functionally, secreted effector that suppresses pattern-triggered immunity (PTI) in plant host. In Plasmopara halstedii (Downy mildew of sunflower), this protein is Secreted RxLR effector protein RXLR-C11.